A 349-amino-acid polypeptide reads, in one-letter code: Phosphoribosylformylglycinamidine cyclo-ligase (349 aa).

It belongs to the AIR synthase family.

The protein localises to the cytoplasm. The enzyme catalyses 2-formamido-N(1)-(5-O-phospho-beta-D-ribosyl)acetamidine + ATP = 5-amino-1-(5-phospho-beta-D-ribosyl)imidazole + ADP + phosphate + H(+). It functions in the pathway purine metabolism; IMP biosynthesis via de novo pathway; 5-amino-1-(5-phospho-D-ribosyl)imidazole from N(2)-formyl-N(1)-(5-phospho-D-ribosyl)glycinamide: step 2/2. This Methanococcus maripaludis (strain DSM 14266 / JCM 13030 / NBRC 101832 / S2 / LL) protein is Phosphoribosylformylglycinamidine cyclo-ligase.